Reading from the N-terminus, the 512-residue chain is Histidine ammonia-lyase (512 aa).

A cross-link (5-imidazolinone (Ala-Gly)) is located at residues 145–147; it reads ASG. Residue S146 is modified to 2,3-didehydroalanine (Ser).

The protein belongs to the PAL/histidase family. In terms of processing, contains an active site 4-methylidene-imidazol-5-one (MIO), which is formed autocatalytically by cyclization and dehydration of residues Ala-Ser-Gly.

The protein resides in the cytoplasm. The enzyme catalyses L-histidine = trans-urocanate + NH4(+). Its pathway is amino-acid degradation; L-histidine degradation into L-glutamate; N-formimidoyl-L-glutamate from L-histidine: step 1/3. The polypeptide is Histidine ammonia-lyase (Pseudomonas fluorescens (strain SBW25)).